Here is a 438-residue protein sequence, read N- to C-terminus: 3-phosphoshikimate 1-carboxyvinyltransferase (438 aa).

3-phosphoshikimate contacts are provided by Lys-26, Ser-27, and Arg-31. A phosphoenolpyruvate-binding site is contributed by Lys-26. Residues Gly-99 and Arg-127 each contribute to the phosphoenolpyruvate site. 3-phosphoshikimate is bound by residues Ser-170, Ser-171, Gln-172, Ser-199, Glu-314, and His-343. Gln-172 serves as a coordination point for phosphoenolpyruvate. The active-site Proton acceptor is Glu-314. Residues Arg-347, Arg-388, and Lys-413 each contribute to the phosphoenolpyruvate site.

It belongs to the EPSP synthase family. In terms of assembly, monomer.

Its subcellular location is the cytoplasm. The catalysed reaction is 3-phosphoshikimate + phosphoenolpyruvate = 5-O-(1-carboxyvinyl)-3-phosphoshikimate + phosphate. It participates in metabolic intermediate biosynthesis; chorismate biosynthesis; chorismate from D-erythrose 4-phosphate and phosphoenolpyruvate: step 6/7. In terms of biological role, catalyzes the transfer of the enolpyruvyl moiety of phosphoenolpyruvate (PEP) to the 5-hydroxyl of shikimate-3-phosphate (S3P) to produce enolpyruvyl shikimate-3-phosphate and inorganic phosphate. The polypeptide is 3-phosphoshikimate 1-carboxyvinyltransferase (Mycobacterium sp. (strain MCS)).